The chain runs to 282 residues: MATYLIGDVHGCYDELIALLHKVEFTPGKDTLWLTGDLVARGPGSLDVLRYVKSLGDSVRLVLGNHDLHLLAVFAGISRNKPKDRLTPLLEAPDADELLNWLRRQPLLQIDEEKKLVMAHAGITPQWDLQTAKECARDVEAVLSSDSYPFFLDAMYGDMPNNWSPELRGLGRLRFITNAFTRMRFCFPNGQLDMYSKESPEEAPAPLKPWFAIPGPVAEEYNIAFGHWASLEGKGTPEGIYALDTGCCWGGTLTCLRWEDKQYFVQPSNRHKDLSEGEAVAS.

The protein belongs to the Ap4A hydrolase family.

It carries out the reaction P(1),P(4)-bis(5'-adenosyl) tetraphosphate + H2O = 2 ADP + 2 H(+). Functionally, hydrolyzes diadenosine 5',5'''-P1,P4-tetraphosphate to yield ADP. This is Bis(5'-nucleosyl)-tetraphosphatase, symmetrical from Escherichia coli O81 (strain ED1a).